A 1193-amino-acid chain; its full sequence is Sperm-associated antigen 5 (1193 aa).

The segment at 1–48 (MWRVKKLSLSLSPSPQTGKPSMRTPLRELTLQPGALTNSGKRSPACSS) is disordered. Residues serine 12, serine 14, serine 43, serine 62, and serine 66 each carry the phosphoserine modification. A compositionally biased stretch (polar residues) spans 35 to 48 (ALTNSGKRSPACSS). A disordered region spans residues 96 to 117 (ESDEQPLDPIPQISSTPKTSEE). The residue at position 111 (threonine 111) is a Phosphothreonine; by GSK3-beta. Residues serine 135, serine 159, and serine 334 each carry the phosphoserine modification. Position 336 is a phosphothreonine (threonine 336). Phosphoserine is present on residues serine 341, serine 353, and serine 362. Positions 390–405 (PSAPQEKSTNTSQTGL) are enriched in polar residues. A disordered region spans residues 390 to 416 (PSAPQEKSTNTSQTGLVGTKHSTSETE). An interaction with KNSTRN region spans residues 482–850 (NKLQHLKESH…LKDTVENLTA (369 aa)). Coiled coils occupy residues 545 to 608 (CCFD…SMRE) and 759 to 868 (QLTQ…EKTR). Residue threonine 937 is modified to Phosphothreonine; by GSK3-beta. Serine 974 is modified (phosphoserine; by GSK3-beta). The residue at position 978 (threonine 978) is a Phosphothreonine; by GSK3-beta. Residues 979 to 1174 (ELQSLCSLLQ…VQHIYKTLLS (196 aa)) are a coiled coil.

As to quaternary structure, homodimer, with a globular head domain and a long stalk. Homooligomer; the globular head domains associate, resulting in aster-like structures. Binds to microtubules in the mitotic spindle. Interacts with DCLRE1B/Apollo. Part of an astrin (SPAG5)-kinastrin (SKAP) complex containing KNSTRN, SPAG5, PLK1, DYNLL1 and SGO2. Interacts with KNSTRN. Interacts with RPTOR; this interaction competes with RPTOR binding to MTOR, resulting in decreased mTORC1 formation. Interacts with G3BP1. The complex formed with G3BP1 AND RPTOR is increased by oxidative stress. Interacts with OSBPL8, PCM1 and CDK5RAP2. Interacts (via C-terminus) with NUMA1 (via C-terminus); this interaction promotes the recruitment of SPAG5 to the microtubules at spindle poles in a dynein-dynactin-dependent manner. Interacts with DYNLL1. In terms of processing, phosphorylated by AURKA. In terms of tissue distribution, highly expressed in testis. Detected at low levels in placenta, liver, pancreas, thymus and colon.

Its subcellular location is the cytoplasm. The protein localises to the cytoskeleton. It localises to the spindle. The protein resides in the spindle pole. It is found in the chromosome. Its subcellular location is the centromere. The protein localises to the kinetochore. It localises to the midbody. The protein resides in the microtubule organizing center. It is found in the centrosome. Its subcellular location is the cytoplasmic granule. The protein localises to the centriolar satellite. Its function is as follows. Essential component of the mitotic spindle required for normal chromosome segregation and progression into anaphase. Required for chromosome alignment, normal timing of sister chromatid segregation, and maintenance of spindle pole architecture. In complex with SKAP, promotes stable microtubule-kinetochore attachments. May contribute to the regulation of separase activity. May regulate AURKA localization to mitotic spindle, but not to centrosomes and CCNB1 localization to both mitotic spindle and centrosomes. Involved in centriole duplication. Required for CDK5RAP2, CEP152, WDR62 and CEP63 centrosomal localization and promotes the centrosomal localization of CDK2. In non-mitotic cells, upon stress induction, inhibits mammalian target of rapamycin complex 1 (mTORC1) association and recruits the mTORC1 component RPTOR to stress granules (SGs), thereby preventing mTORC1 hyperactivation-induced apoptosis. May enhance GSK3B-mediated phosphorylation of other substrates, such as MAPT/TAU. The chain is Sperm-associated antigen 5 (SPAG5) from Homo sapiens (Human).